The primary structure comprises 524 residues: Alkaline phosphatase, tissue-nonspecific isozyme (524 aa).

The signal sequence occupies residues 1 to 17; sequence MILPFLVLAIGTCLTNS. A Mg(2+)-binding site is contributed by Asp-60. Zn(2+) is bound by residues Asp-60 and Ser-110. Ser-110 functions as the Phosphoserine intermediate in the catalytic mechanism. Ser-110 is modified (phosphoserine). An intrachain disulfide couples Cys-139 to Cys-201. An N-linked (GlcNAc...) asparagine glycan is attached at Asn-140. Thr-173 is a binding site for Mg(2+). The N-linked (GlcNAc...) asparagine glycan is linked to Asn-230. Residue Glu-235 coordinates Ca(2+). Residue Asn-271 is glycosylated (N-linked (GlcNAc...) asparagine). Residues Phe-290 and Glu-291 each contribute to the Ca(2+) site. Asn-303 is a glycosylation site (N-linked (GlcNAc...) asparagine). Asp-306 contributes to the Ca(2+) binding site. Glu-332 lines the Mg(2+) pocket. The Zn(2+) site is built by Asp-337, His-341, Asp-378, and His-379. Asn-430 is a glycosylation site (N-linked (GlcNAc...) asparagine). His-454 contacts Zn(2+). A disulfide bridge links Cys-489 with Cys-497. A lipid anchor (GPI-anchor amidated serine) is attached at Ser-501. The propeptide at 502-524 is removed in mature form; that stretch reads SASSPSPGALLLPLALFPLRTLF.

This sequence belongs to the alkaline phosphatase family. In terms of assembly, homodimer. The cofactor is Mg(2+). Zn(2+) serves as cofactor. It depends on Ca(2+) as a cofactor. Post-translationally, N-glycosylated.

It is found in the cell membrane. Its subcellular location is the extracellular vesicle membrane. The protein localises to the mitochondrion membrane. It localises to the mitochondrion intermembrane space. The catalysed reaction is a phosphate monoester + H2O = an alcohol + phosphate. The enzyme catalyses diphosphate + H2O = 2 phosphate + H(+). It catalyses the reaction pyridoxal 5'-phosphate + H2O = pyridoxal + phosphate. It carries out the reaction phosphoethanolamine + H2O = ethanolamine + phosphate. The catalysed reaction is N-phosphocreatine + H2O = creatine + phosphate. The enzyme catalyses ATP + H2O = ADP + phosphate + H(+). It catalyses the reaction ADP + H2O = AMP + phosphate + H(+). It carries out the reaction AMP + H2O = adenosine + phosphate. Phosphatase activity is specifically inhibited by 5-((5-chloro-2-methoxyphenyl)sulfonamido)nicotinamide (SBI-425). Alkaline phosphatase that metabolizes various phosphate compounds and plays a key role in skeletal mineralization and adaptive thermogenesis. Has broad substrate specificity and can hydrolyze a considerable variety of compounds: however, only a few substrates, such as diphosphate (inorganic pyrophosphate; PPi), pyridoxal 5'-phosphate (PLP) and N-phosphocreatine are natural substrates. Plays an essential role in skeletal and dental mineralization via its ability to hydrolyze extracellular diphosphate, a potent mineralization inhibitor, to phosphate: it thereby promotes hydroxyapatite crystal formation and increases inorganic phosphate concentration. Acts in a non-redundant manner with PHOSPHO1 in skeletal mineralization: while PHOSPHO1 mediates the initiation of hydroxyapatite crystallization in the matrix vesicles (MVs), ALPL/TNAP catalyzes the spread of hydroxyapatite crystallization in the extracellular matrix. Also promotes dephosphorylation of osteopontin (SSP1), an inhibitor of hydroxyapatite crystallization in its phosphorylated state; it is however unclear whether ALPL/TNAP mediates SSP1 dephosphorylation via a direct or indirect manner. Catalyzes dephosphorylation of PLP to pyridoxal (PL), the transportable form of vitamin B6, in order to provide a sufficient amount of PLP in the brain, an essential cofactor for enzymes catalyzing the synthesis of diverse neurotransmitters. Additionally, also able to mediate ATP degradation in a stepwise manner to adenosine, thereby regulating the availability of ligands for purinergic receptors. Also capable of dephosphorylating microbial products, such as lipopolysaccharides (LPS) as well as other phosphorylated small-molecules, such as poly-inosine:cytosine (poly I:C). Acts as a key regulator of adaptive thermogenesis as part of the futile creatine cycle: localizes to the mitochondria of thermogenic fat cells and acts by mediating hydrolysis of N-phosphocreatine to initiate a futile cycle of creatine dephosphorylation and phosphorylation. During the futile creatine cycle, creatine and N-phosphocreatine are in a futile cycle, which dissipates the high energy charge of N-phosphocreatine as heat without performing any mechanical or chemical work. In Rattus norvegicus (Rat), this protein is Alkaline phosphatase, tissue-nonspecific isozyme (Alpl).